Reading from the N-terminus, the 770-residue chain is ATP-dependent RNA helicase mak5 (770 aa).

Over residues Met-1–Lys-10 the composition is skewed to basic and acidic residues. 2 disordered regions span residues Met-1–Ser-33 and Asn-78–Arg-174. Residues Thr-105–Asp-118 are compositionally biased toward acidic residues. 2 stretches are compositionally biased toward basic and acidic residues: residues Asn-138 to Lys-154 and Glu-162 to Arg-174. The Q motif signature appears at Ser-197–Lys-225. Residues Ile-228–Asp-437 enclose the Helicase ATP-binding domain. Ala-241–Thr-248 is an ATP binding site. Positions Asp-363 to Asp-366 match the DEAD box motif. The interval Leu-384–Val-404 is disordered. A compositionally biased stretch (acidic residues) spans Gly-391–Glu-401. A Helicase C-terminal domain is found at Tyr-489 to Asp-639. The interval Lys-693–Thr-713 is disordered.

Belongs to the DEAD box helicase family. DDX24/MAK5 subfamily.

The protein resides in the nucleus. Its subcellular location is the nucleolus. It catalyses the reaction ATP + H2O = ADP + phosphate + H(+). In terms of biological role, ATP-binding RNA helicase involved in the biogenesis of 60S ribosomal subunits and is required for the normal formation of 25S and 5.8S rRNAs. This Emericella nidulans (strain FGSC A4 / ATCC 38163 / CBS 112.46 / NRRL 194 / M139) (Aspergillus nidulans) protein is ATP-dependent RNA helicase mak5 (mak5).